Here is a 118-residue protein sequence, read N- to C-terminus: Small ribosomal subunit protein uS13 (118 aa).

The segment at 94 to 118 (SLPVRGQRTKTNARTRKGPRKPIKK) is disordered.

It belongs to the universal ribosomal protein uS13 family. In terms of assembly, part of the 30S ribosomal subunit. Forms a loose heterodimer with protein S19. Forms two bridges to the 50S subunit in the 70S ribosome.

Its function is as follows. Located at the top of the head of the 30S subunit, it contacts several helices of the 16S rRNA. In the 70S ribosome it contacts the 23S rRNA (bridge B1a) and protein L5 of the 50S subunit (bridge B1b), connecting the 2 subunits; these bridges are implicated in subunit movement. Contacts the tRNAs in the A and P-sites. The chain is Small ribosomal subunit protein uS13 from Haemophilus influenzae (strain 86-028NP).